The sequence spans 130 residues: Small ribosomal subunit protein uS9 (130 aa).

It belongs to the universal ribosomal protein uS9 family.

The sequence is that of Small ribosomal subunit protein uS9 from Caldicellulosiruptor saccharolyticus (strain ATCC 43494 / DSM 8903 / Tp8T 6331).